Consider the following 727-residue polypeptide: C-terminal-binding protein 1 (727 aa).

The THAP-type zinc-finger motif lies at 5–60 (CGFPNCKFRSRYRGLEDNRHFYRIPKRPLILRQRWLTAIGRTEETVVSQLRICSAH). The interval 64 to 158 (GEKKEGDIPV…HPPVLPDPQQ (95 aa)) is disordered. The span at 77-94 (TVDKQIKIELPPKESKNS) shows a compositional bias: basic and acidic residues. Residues Y251, 331 to 336 (LGCGRV), D355, 388 to 394 (CNLGDET), 415 to 417 (TSH), D441, and 467 to 470 (HSAW) each bind NAD(+). Positions 587–613 (ANAQRGSPANRSSRSSPSPHTNKSSVS) are enriched in low complexity. 2 disordered regions span residues 587 to 629 (ANAQ…SPAA) and 652 to 681 (APNG…GDEN).

Belongs to the D-isomer specific 2-hydroxyacid dehydrogenase family. Homodimer.

In terms of biological role, binds DNA and represses gene expression. Plays a role in regulation of life span, possibly by regulating transcription of genes important for lipid metabolism. The protein is C-terminal-binding protein 1 of Caenorhabditis elegans.